A 198-amino-acid chain; its full sequence is FMN-dependent NADH:quinone oxidoreductase (198 aa).

FMN contacts are provided by residues 92-95 and 136-139; these read MWNL and SRGG.

Belongs to the azoreductase type 1 family. Homodimer. Requires FMN as cofactor.

It catalyses the reaction 2 a quinone + NADH + H(+) = 2 a 1,4-benzosemiquinone + NAD(+). The enzyme catalyses N,N-dimethyl-1,4-phenylenediamine + anthranilate + 2 NAD(+) = 2-(4-dimethylaminophenyl)diazenylbenzoate + 2 NADH + 2 H(+). Its function is as follows. Quinone reductase that provides resistance to thiol-specific stress caused by electrophilic quinones. Functionally, also exhibits azoreductase activity. Catalyzes the reductive cleavage of the azo bond in aromatic azo compounds to the corresponding amines. This is FMN-dependent NADH:quinone oxidoreductase from Clostridium perfringens (strain ATCC 13124 / DSM 756 / JCM 1290 / NCIMB 6125 / NCTC 8237 / Type A).